The following is a 430-amino-acid chain: Adenylosuccinate synthetase (430 aa).

Residues 13 to 19 and 41 to 43 each bind GTP; these read GDEGKGK and GHT. Aspartate 14 (proton acceptor) is an active-site residue. Residues aspartate 14 and glycine 41 each coordinate Mg(2+). IMP contacts are provided by residues 14 to 17, 39 to 42, threonine 130, arginine 144, glutamine 225, threonine 240, and arginine 304; these read DEGK and NAGH. The Proton donor role is filled by histidine 42. 300–306 lines the substrate pocket; it reads ASTGRPR. GTP contacts are provided by residues arginine 306, 332–334, and 414–416; these read KLD and STG.

The protein belongs to the adenylosuccinate synthetase family. Homodimer. Mg(2+) serves as cofactor.

It is found in the cytoplasm. The catalysed reaction is IMP + L-aspartate + GTP = N(6)-(1,2-dicarboxyethyl)-AMP + GDP + phosphate + 2 H(+). It functions in the pathway purine metabolism; AMP biosynthesis via de novo pathway; AMP from IMP: step 1/2. Functionally, plays an important role in the de novo pathway of purine nucleotide biosynthesis. Catalyzes the first committed step in the biosynthesis of AMP from IMP. In Stenotrophomonas maltophilia (strain R551-3), this protein is Adenylosuccinate synthetase.